Consider the following 224-residue polypeptide: UPF0173 metal-dependent hydrolase EF_1371 (224 aa).

Belongs to the UPF0173 family.

This chain is UPF0173 metal-dependent hydrolase EF_1371, found in Enterococcus faecalis (strain ATCC 700802 / V583).